Consider the following 166-residue polypeptide: Small ribosomal subunit protein uS5 (166 aa).

An S5 DRBM domain is found at 11-74 (LIEKLVSVKR…ENAKKNMVSV (64 aa)).

Belongs to the universal ribosomal protein uS5 family. In terms of assembly, part of the 30S ribosomal subunit. Contacts proteins S4 and S8.

Functionally, with S4 and S12 plays an important role in translational accuracy. Its function is as follows. Located at the back of the 30S subunit body where it stabilizes the conformation of the head with respect to the body. This Francisella tularensis subsp. holarctica (strain LVS) protein is Small ribosomal subunit protein uS5.